Here is a 469-residue protein sequence, read N- to C-terminus: Sorting and assembly machinery component 50 homolog (469 aa).

A disordered region spans residues 1–20 (MGTVHARSLEPLPSSGPDFG). A POTRA domain is found at 45–125 (VVVQHVHFDG…LDVTFEVTEL (81 aa)). Lys-255 carries the N6-methyllysine modification.

This sequence belongs to the SAM50/omp85 family. Associates with the mitochondrial contact site and cristae organizing system (MICOS) complex, composed of at least MICOS10/MIC10, CHCHD3/MIC19, CHCHD6/MIC25, APOOL/MIC27, IMMT/MIC60, APOO/MIC23/MIC26 and QIL1/MIC13. This complex was also known under the names MINOS or MitOS complex. The MICOS complex associates with mitochondrial outer membrane proteins SAMM50, MTX1 and MTX2 (together described as components of the mitochondrial outer membrane sorting assembly machinery (SAM) complex) and DNAJC11, mitochondrial inner membrane protein TMEM11 and with HSPA9. The MICOS and SAM complexes together with DNAJC11 are part of a large protein complex spanning both membranes termed the mitochondrial intermembrane space bridging (MIB) complex. Interacts with CHCHD3/MIC19. Interacts with ARMC1. As to quaternary structure, (Microbial infection) Interacts with parasite T.gondii RH strain MAF1b1; the interaction is probably indirect and results in the disruption of the MIB complex and the formation of SPOTs (structures positive for outer mitochondrial membrane (OMM)), a cellular response to OMM stress, which leads to the constitutive shedding of OMM vesicles.

Its subcellular location is the mitochondrion outer membrane. It is found in the cytoplasm. It localises to the mitochondrion. Functionally, plays a crucial role in the maintenance of the structure of mitochondrial cristae and the proper assembly of the mitochondrial respiratory chain complexes. Required for the assembly of TOMM40 into the TOM complex. This is Sorting and assembly machinery component 50 homolog (SAMM50) from Homo sapiens (Human).